An 84-amino-acid polypeptide reads, in one-letter code: Delta-conotoxin-like MVIB (84 aa).

A signal peptide spans 1–22; that stretch reads MKLTCVMIVAVLFLTAWTFVTA. A propeptide spanning residues 23–51 is cleaved from the precursor; the sequence is DDSRYGLKDLFPKERHEMKNPEASKLNQR. Intrachain disulfides connect Cys-54–Cys-69, Cys-61–Cys-73, and Cys-68–Cys-77. Position 65 is a 4-hydroxyproline (Pro-65). Residue Ser-83 is modified to Serine amide.

The protein belongs to the conotoxin O1 superfamily. Expressed by the venom duct.

It is found in the secreted. Delta-conotoxins bind to site 6 of voltage-gated sodium channels (Nav) and inhibit the inactivation process. The chain is Delta-conotoxin-like MVIB from Conus magus (Magical cone).